Here is a 599-residue protein sequence, read N- to C-terminus: Sodium-dependent phosphate transport protein 2C (599 aa).

At 1 to 76 (MPSSLPGSQV…RRVAGSVLKA (76 aa)) the chain is on the cytoplasmic side. S4 is subject to Phosphoserine. The helical transmembrane segment at 77-97 (CGLLGSLYFFICSLDVLSSAF) threads the bilayer. The Extracellular portion of the chain corresponds to 98–111 (QLLGSKVAGDIFKD). Residues 112 to 132 (NVVLSNPVAGLVIGVLVTALV) form a helical membrane-spanning segment. At 133-188 (QSSSTSSSIVVSMVAAKLLTVRVSVPIIMGVNVGTSITSTLVSMAQSGDRDEFQRA) the chain is on the cytoplasmic side. A helical membrane pass occupies residues 189–209 (FSGSAVHGIFNWLTVLVLLPL). Residues 210–322 (ESATALLERL…FAGTELTDLA (113 aa)) lie on the Extracellular side of the membrane. Residues N265, N268, N286, and N299 are each glycosylated (N-linked (GlcNAc...) asparagine). An intrachain disulfide couples C276 to C309. Residues 323-343 (VGCILLAGSLLVLCGCLVLIV) form a helical membrane-spanning segment. The Cytoplasmic portion of the chain corresponds to 344 to 367 (KLLNSVLRGRVAQVVRTVINADFP). A helical transmembrane segment spans residues 368 to 388 (FPLGWLGGYLAVLAGAGLTFA). Over 389–445 (LQSSSVFTAAVVPLMGVGVISLDRAYPLLLGSNIGTTTTALLAALASPADRMLSALQ) the chain is Extracellular. The helical transmembrane segment at 446-466 (VALIHFFFNLAGILLWYLVPA) threads the bilayer. Topologically, residues 467 to 485 (LRLPIPLARHFGVVTARYR) are cytoplasmic. A helical transmembrane segment spans residues 486 to 506 (WVAGVYLLLGFLLLPLAAFGL). Over 507 to 510 (SLAG) the chain is Extracellular. A helical membrane pass occupies residues 511 to 531 (GMELAAVGGPLVGLVLLVILV). The Cytoplasmic portion of the chain corresponds to 532–599 (TVLQRRRPAW…NPEILASQQL (68 aa)).

Belongs to the SLC34A transporter family. In terms of tissue distribution, expressed only in the kidney.

The protein localises to the apical cell membrane. It catalyses the reaction 2 Na(+)(out) + phosphate(out) = 2 Na(+)(in) + phosphate(in). Its function is as follows. Involved in actively transporting phosphate into cells via Na(+) cotransport in the renal brush border membrane. The cotransport has a Na(+):Pi stoichiometry of 2:1 and is electroneutral. In Homo sapiens (Human), this protein is Sodium-dependent phosphate transport protein 2C (SLC34A3).